The chain runs to 120 residues: Membrane-anchored ubiquitin-fold protein 5 (120 aa).

Residues 7–72 (IELKFRLADG…ILENNKTLSE (66 aa)) enclose the Ubiquitin-like domain. C115 carries S-palmitoyl cysteine lipidation. A Cysteine methyl ester modification is found at C117. Residue C117 is the site of S-geranylgeranyl cysteine attachment. Positions 118–120 (CIL) are cleaved as a propeptide — removed in mature form.

As to expression, ubiquitous.

It is found in the cell membrane. Functionally, may serve as docking site to facilitate the association of other proteins to the plasma membrane. The polypeptide is Membrane-anchored ubiquitin-fold protein 5 (MUB5) (Arabidopsis thaliana (Mouse-ear cress)).